Reading from the N-terminus, the 391-residue chain is GDSL esterase/lipase 22 (391 aa).

The first 29 residues, 1-29 (MMANNCNLVSVLCVILVLTLFHNPITVAG), serve as a signal peptide directing secretion. The Nucleophile role is filled by serine 43. N-linked (GlcNAc...) asparagine glycans are attached at residues asparagine 105, asparagine 165, and asparagine 288. Residues aspartate 322 and histidine 325 contribute to the active site. The segment at 372-391 (PATVHASDSSSSTSRGYEYY) is disordered.

This sequence belongs to the 'GDSL' lipolytic enzyme family. In terms of assembly, component of the PYK10 complex, at least composed of PYK10/BGLU23, BGLU21, BGLU22, JAL22, JAL23, PBP1/JAL30, PBP2/JAL31, JAL32, JAL33, JAL34, JAL35, GLL22 and GLL23.

The protein localises to the secreted. The polypeptide is GDSL esterase/lipase 22 (GLL22) (Arabidopsis thaliana (Mouse-ear cress)).